A 370-amino-acid chain; its full sequence is Protein TEEBE (370 aa).

Positions 1–21 are cleaved as a signal peptide; the sequence is MSLYHSLSIFLLLSLCHGSYS. The N-linked (GlcNAc...) asparagine glycan is linked to Asn-215.

As to expression, expressed in primary and lateral roots, stigmatic papillae and hypocotyls.

It is found in the secreted. Its subcellular location is the cell wall. Functionally, prevents hypocotyl epidermal cells elongation by modulating the pectin status in cell walls. Likely regulates pectin methylesterification degree during cell separation and elongation, including upon root-knot nematode Meloidogyne incognita infection. This chain is Protein TEEBE, found in Arabidopsis thaliana (Mouse-ear cress).